Consider the following 691-residue polypeptide: Elongation factor G (691 aa).

The tr-type G domain occupies 8–283 (EDYRNFGIMA…AVVDFLPSPI (276 aa)). GTP is bound by residues 17–24 (AHIDAGKT), 81–85 (DTPGH), and 135–138 (NKMD).

Belongs to the TRAFAC class translation factor GTPase superfamily. Classic translation factor GTPase family. EF-G/EF-2 subfamily.

It localises to the cytoplasm. In terms of biological role, catalyzes the GTP-dependent ribosomal translocation step during translation elongation. During this step, the ribosome changes from the pre-translocational (PRE) to the post-translocational (POST) state as the newly formed A-site-bound peptidyl-tRNA and P-site-bound deacylated tRNA move to the P and E sites, respectively. Catalyzes the coordinated movement of the two tRNA molecules, the mRNA and conformational changes in the ribosome. The chain is Elongation factor G from Xanthobacter autotrophicus (strain ATCC BAA-1158 / Py2).